Reading from the N-terminus, the 121-residue chain is Small ribosomal subunit protein uS13 (121 aa).

Residues 97–121 are disordered; that stretch reads VRGQRTRTNARTRRGARKTVAGRKK. Residues 100-121 show a composition bias toward basic residues; that stretch reads QRTRTNARTRRGARKTVAGRKK.

Belongs to the universal ribosomal protein uS13 family. In terms of assembly, part of the 30S ribosomal subunit. Forms a loose heterodimer with protein S19. Forms two bridges to the 50S subunit in the 70S ribosome.

Its function is as follows. Located at the top of the head of the 30S subunit, it contacts several helices of the 16S rRNA. In the 70S ribosome it contacts the 23S rRNA (bridge B1a) and protein L5 of the 50S subunit (bridge B1b), connecting the 2 subunits; these bridges are implicated in subunit movement. Contacts the tRNAs in the A and P-sites. This is Small ribosomal subunit protein uS13 from Prochlorococcus marinus (strain NATL2A).